A 249-amino-acid polypeptide reads, in one-letter code: Transmembrane protein 150C (249 aa).

The Cytoplasmic segment spans residues 1–9 (MDGKKCSVW). The chain crosses the membrane as a helical span at residues 10–30 (MFLPLVFTLFTSAGLWIVYFI). The Extracellular segment spans residues 31–64 (AVEDDKILPLNSAERKPGVKHAPYISIAGDDPPA). Residues 65-85 (SCVFSQVMNMAAFLALVVAVL) form a helical membrane-spanning segment. Residues 86–97 (RFIQLKPKVLNP) are Cytoplasmic-facing. A helical transmembrane segment spans residues 98–118 (WLNISGLVALCLASFGMTLLG). The Extracellular portion of the chain corresponds to 119-130 (NFQLTNDEEIHN). The helical transmembrane segment at 131-151 (VGTSLTFGFGTLTCWIQAALT) threads the bilayer. Over 152–168 (LKVNIKNEGRRVGIPRV) the chain is Cytoplasmic. A helical membrane pass occupies residues 169 to 189 (ILSASITLCVVLYFILMAQSI). Residues 190-192 (HMY) lie on the Extracellular side of the membrane. Residues 193 to 213 (AARVQWGLVMCFLSYFGTFAV) traverse the membrane as a helical segment. At 214 to 249 (EFRHYRYEIVCSEYQENFLSFSESLSEASEYQTDQV) the chain is on the cytoplasmic side.

Belongs to the DRAM/TMEM150 family.

The protein localises to the cell membrane. It localises to the lysosome membrane. The enzyme catalyses Ca(2+)(in) = Ca(2+)(out). It catalyses the reaction Na(+)(in) = Na(+)(out). It carries out the reaction K(+)(in) = K(+)(out). The catalysed reaction is Mg(2+)(in) = Mg(2+)(out). Its function is as follows. Nonselective cationic channel with high permeability to Ca(2+). Component of a mechanosensitive cation channel, confers mechanically activated (MA) currents with slow inactivation kinetics. May contribute to proprioception. This Homo sapiens (Human) protein is Transmembrane protein 150C.